Reading from the N-terminus, the 298-residue chain is ATP synthase gamma chain (298 aa).

This sequence belongs to the ATPase gamma chain family. As to quaternary structure, F-type ATPases have 2 components, CF(1) - the catalytic core - and CF(0) - the membrane proton channel. CF(1) has five subunits: alpha(3), beta(3), gamma(1), delta(1), epsilon(1). CF(0) has three main subunits: a, b and c.

Its subcellular location is the cell inner membrane. In terms of biological role, produces ATP from ADP in the presence of a proton gradient across the membrane. The gamma chain is believed to be important in regulating ATPase activity and the flow of protons through the CF(0) complex. In Francisella tularensis subsp. tularensis (strain FSC 198), this protein is ATP synthase gamma chain.